The primary structure comprises 143 residues: Transcriptional regulator MraZ (143 aa).

SpoVT-AbrB domains lie at 5 to 47 (THTP…PMQE) and 76 to 119 (ASSE…DLRT).

It belongs to the MraZ family. In terms of assembly, forms oligomers.

It is found in the cytoplasm. It localises to the nucleoid. The polypeptide is Transcriptional regulator MraZ (Kineococcus radiotolerans (strain ATCC BAA-149 / DSM 14245 / SRS30216)).